Here is a 462-residue protein sequence, read N- to C-terminus: NADH-quinone oxidoreductase subunit N 1 (462 aa).

A run of 15 helical transmembrane segments spans residues phenylalanine 4–leucine 24, alanine 32–alanine 52, isoleucine 60–alanine 80, phenylalanine 88–alanine 108, tryptophan 113–alanine 133, phenylalanine 148–alanine 168, leucine 178–phenylalanine 198, valine 220–cysteine 240, leucine 251–valine 271, leucine 279–asparagine 299, leucine 307–leucine 327, alanine 351–valine 371, phenylalanine 374–isoleucine 394, leucine 416–valine 436, and alanine 439–phenylalanine 459.

Belongs to the complex I subunit 2 family. NDH-1 is composed of 14 different subunits. Subunits NuoA, H, J, K, L, M, N constitute the membrane sector of the complex.

It localises to the cell inner membrane. The catalysed reaction is a quinone + NADH + 5 H(+)(in) = a quinol + NAD(+) + 4 H(+)(out). In terms of biological role, NDH-1 shuttles electrons from NADH, via FMN and iron-sulfur (Fe-S) centers, to quinones in the respiratory chain. The immediate electron acceptor for the enzyme in this species is believed to be ubiquinone. Couples the redox reaction to proton translocation (for every two electrons transferred, four hydrogen ions are translocated across the cytoplasmic membrane), and thus conserves the redox energy in a proton gradient. In Solidesulfovibrio magneticus (strain ATCC 700980 / DSM 13731 / RS-1) (Desulfovibrio magneticus), this protein is NADH-quinone oxidoreductase subunit N 1.